Reading from the N-terminus, the 392-residue chain is GDP-mannose transporter (392 aa).

Residues 1 to 11 are compositionally biased toward basic and acidic residues; the sequence is MDDKKNEDLEM. The segment at 1–25 is disordered; that stretch reads MDDKKNEDLEMRNFNGRSSPSQRDP. Residues 1 to 45 are Cytoplasmic-facing; that stretch reads MDDKKNEDLEMRNFNGRSSPSQRDPFLAKPGAAAKRGNSAFDLSN. Residues 46 to 66 form a helical membrane-spanning segment; sequence VTNSPGISILAYCLASISMTV. The Lumenal portion of the chain corresponds to 67-76; that stretch reads TNKYCVSGSN. Residues 77 to 97 form a helical membrane-spanning segment; that stretch reads WNLNFFYLAIQSVVCIIAIII. The Cytoplasmic segment spans residues 98 to 116; it reads CKQAGLITNLAPFDTKKAK. The chain crosses the membrane as a helical span at residues 117 to 139; sequence TWFPISLLLVGMIYTSTKALQFL. The Lumenal portion of the chain corresponds to 140–142; that stretch reads SVP. Residues 143–165 form a helical membrane-spanning segment; that stretch reads VYTIFKNLTIIVIAYGEVLWFGG. The Cytoplasmic segment spans residues 166–171; sequence SVTPSA. The helical transmembrane segment at 172-191 threads the bilayer; it reads LFSFGLMVLSSVVAAWADIQ. Topologically, residues 192-210 are lumenal; that stretch reads HALYGGGAAQSAEAAAALS. Residues 211–231 form a helical membrane-spanning segment; that stretch reads TLNAGYAWMGMNVFCTAAYVL. Topologically, residues 232 to 246 are cytoplasmic; sequence SMRKVIKKMNFKDWD. A helical membrane pass occupies residues 247–267; it reads TMFYNNLLTIPVLFVCSFIFE. N-linked (GlcNAc...) asparagine glycans are attached at residues N268 and N273. Over 268–285 the chain is Lumenal; it reads NWSSENLTKNFPLETRNN. Residues 286 to 306 form a helical membrane-spanning segment; that stretch reads LILGMIYSGLATIFISYCSAW. The Cytoplasmic segment spans residues 307–314; that stretch reads CIRVTSST. A helical transmembrane segment spans residues 315–337; sequence TYSMVGALNKLPIAVSGLVFFAA. At 338–340 the chain is on the lumenal side; the sequence is PVT. A helical transmembrane segment spans residues 341-360; that stretch reads FGSVSAIFIGFVSGIVYAWA. Residues 361–392 lie on the Cytoplasmic side of the membrane; it reads KVRQNQSKGNILPTTQPVMSASSQSNRDAAKA. The segment at 373-392 is disordered; that stretch reads PTTQPVMSASSQSNRDAAKA.

This sequence belongs to the TPT transporter family. SLC35D subfamily. Homooligomer.

Its subcellular location is the golgi apparatus membrane. The protein localises to the cytoplasmic vesicle membrane. It is found in the endoplasmic reticulum membrane. Functionally, involved in the import of GDP-mannose from the cytoplasm into the Golgi lumen. The polypeptide is GDP-mannose transporter (gmt1) (Botryotinia fuckeliana (strain B05.10) (Noble rot fungus)).